A 408-amino-acid polypeptide reads, in one-letter code: Methyltransferase/ribosomally synthesized type I borosin cyclic peptide precursor sveMA (408 aa).

Residues 1-250 form a methyltransferase domain region; sequence MASSTHPKRG…TSSTFYIPPR (250 aa). Catalysis depends on residues arginine 73, tyrosine 77, and tyrosine 99. S-adenosyl-L-methionine-binding residues include tyrosine 99, histidine 101, isoleucine 104, alanine 131, glutamine 173, glycine 211, serine 242, and threonine 244. The tract at residues 251 to 375 is clasp domain; sequence DSEAIDYDMV…GSVYKVMSAT (125 aa). Positions 371 to 385 are precursor leader; it reads VMSATQADIELGKEP. An N-methylvaline modification is found at valine 401. At isoleucine 402 the chain carries N-methylisoleucine. Position 406 is an N-methylvaline (valine 406).

This sequence in the N-terminal section; belongs to the precorrin methyltransferase family. In terms of assembly, homodimer. In terms of processing, sveMA automethylates at Val-401, Ile-402 and Val-406 before being processed by a prolyloligopeptidase which likely forms a peptidyl ester upon removal of the follower propeptide, which then undergoes macrocyclization with the N-terminus of the modified core peptide. Peptide backbone alpha-N-methylations change the physicochemical properties of amide bonds to provide structural constraints and other favorable characteristics including biological membrane permeability to peptides.

Its pathway is secondary metabolite biosynthesis. In terms of biological role, fusion protein of the methyltransferase sveM and a type I borosin core peptide; part of the gene cluster that mediates the biosynthesis of a type I borosin, a highly methylated cyclic peptide with potent biological activities. Type I borosins derive from the C-terminus of the fusion protein, and it is the same protein that methylates its own C-terminus using S-adenosyl methionine (SAM). The C-terminus is subsequently cleaved off and macrocyclized by a prolyloligopeptidase to give the final product. In Serendipita vermifera subsp. bescii (Mycorrhizal fungus), this protein is Methyltransferase/ribosomally synthesized type I borosin cyclic peptide precursor sveMA.